The primary structure comprises 146 residues: D-aminoacyl-tRNA deacylase (146 aa).

A Gly-cisPro motif, important for rejection of L-amino acids motif is present at residues 138 to 139 (GP).

The protein belongs to the DTD family. Homodimer.

Its subcellular location is the cytoplasm. The catalysed reaction is glycyl-tRNA(Ala) + H2O = tRNA(Ala) + glycine + H(+). It carries out the reaction a D-aminoacyl-tRNA + H2O = a tRNA + a D-alpha-amino acid + H(+). Its function is as follows. An aminoacyl-tRNA editing enzyme that deacylates mischarged D-aminoacyl-tRNAs. Also deacylates mischarged glycyl-tRNA(Ala), protecting cells against glycine mischarging by AlaRS. Acts via tRNA-based rather than protein-based catalysis; rejects L-amino acids rather than detecting D-amino acids in the active site. By recycling D-aminoacyl-tRNA to D-amino acids and free tRNA molecules, this enzyme counteracts the toxicity associated with the formation of D-aminoacyl-tRNA entities in vivo and helps enforce protein L-homochirality. In Xanthomonas oryzae pv. oryzae (strain MAFF 311018), this protein is D-aminoacyl-tRNA deacylase.